Reading from the N-terminus, the 198-residue chain is RxLR effector protein CRE4 (198 aa).

Positions 1-20 are cleaved as a signal peptide; that stretch reads MLRSFLLIVATVSLFGQCKP. The short motif at 43–52 is the RxLR-dEER element; that stretch reads RFVRTNDEER.

Belongs to the RxLR effector family.

Its subcellular location is the secreted. It localises to the host cytoplasm. It is found in the host nucleus. The protein resides in the host nucleolus. In terms of biological role, effector that is involved in host plant infection. Contributes to virulence during the early infection stage, by inhibiting plant defense responses induced by both PAMP-triggered immunity (PTI) and effector-triggered immunity (ETI). In Phytophthora infestans (strain T30-4) (Potato late blight agent), this protein is RxLR effector protein CRE4 (CRE4).